Reading from the N-terminus, the 186-residue chain is Adenylate kinase isoenzyme 6 homolog (186 aa).

Positions 15, 17, 18, 19, and 20 each coordinate ATP. Residues 48–71 form an NMPbind region; that stretch reads NLSNIIKDERLYKEFDDELDASIY. The interval 126-136 is LID; that stretch reads KRNYTKEKIKN. Arg127 is an ATP binding site.

It belongs to the adenylate kinase family. AK6 subfamily. In terms of assembly, monomer and homodimer. Interacts with small ribosomal subunit protein uS11. Not a structural component of 43S pre-ribosomes, but transiently interacts with them by binding to uS11.

Its subcellular location is the cytoplasm. The protein localises to the nucleus. It catalyses the reaction AMP + ATP = 2 ADP. The catalysed reaction is ATP + H2O = ADP + phosphate + H(+). In terms of biological role, broad-specificity nucleoside monophosphate (NMP) kinase that catalyzes the reversible transfer of the terminal phosphate group between nucleoside triphosphates and monophosphates. Also has ATPase activity. Involved in the late cytoplasmic maturation steps of the 40S ribosomal particles, specifically 18S rRNA maturation. While NMP activity is not required for ribosome maturation, ATPase activity is. Associates transiently with small ribosomal subunit protein uS11. ATP hydrolysis breaks the interaction with uS11. May temporarily remove uS11 from the ribosome to enable a conformational change of the ribosomal RNA that is needed for the final maturation step of the small ribosomal subunit. Its NMP activity may have a role in nuclear energy homeostasis. The chain is Adenylate kinase isoenzyme 6 homolog from Plasmodium falciparum (isolate 3D7).